Here is a 94-residue protein sequence, read N- to C-terminus: MDWTKMTFMGTVDEVKEIWNGLEEAGRLYAVWLSDDHVYGIVDVNEEGLFCLGWVSDISPESLQNMLGGGAELFESYEDVLSEHGGSIAIRVEV.

This Bacillus subtilis (Bacteriophage SP01) protein is Putative gene 47 protein (47).